A 500-amino-acid polypeptide reads, in one-letter code: Glucose-1-phosphate adenylyltransferase large subunit, chloroplastic/amyloplastic (500 aa).

A chloroplast-targeting transit peptide spans 1–33; sequence RASPPSESRAPLRAPQRSATRQHQARQGPRRMC. The disordered stretch occupies residues 1 to 47; sequence RASPPSESRAPLRAPQRSATRQHQARQGPRRMCNGGRGPPYWTAGVT.

It belongs to the bacterial/plant glucose-1-phosphate adenylyltransferase family. As to quaternary structure, heterotetramer.

Its subcellular location is the plastid. The protein localises to the chloroplast. It is found in the amyloplast. It catalyses the reaction alpha-D-glucose 1-phosphate + ATP + H(+) = ADP-alpha-D-glucose + diphosphate. Its pathway is glycan biosynthesis; starch biosynthesis. Insensitive to 3'phosphoglycerate and orthophosphate. Functionally, this protein plays a role in synthesis of starch. It catalyzes the synthesis of the activated glycosyl donor, ADP-glucose from Glc-1-P and ATP. The protein is Glucose-1-phosphate adenylyltransferase large subunit, chloroplastic/amyloplastic (AGA.7) of Triticum aestivum (Wheat).